The primary structure comprises 215 residues: Endoplasmic reticulum vesicle protein 25 (215 aa).

Positions 1 to 21 are cleaved as a signal peptide; that stretch reads MQSLITYIALVFSLFVSSAIG. At 22 to 184 the chain is on the lumenal side; it reads LHLEVPALPN…TNESTNSRVK (163 aa). Positions 34–125 constitute a GOLD domain; it reads PVCIRDFVQE…VRSVELDIES (92 aa). The helical transmembrane segment at 185-205 threads the bilayer; that stretch reads WFSIVVIASLVGFGVWQIQYL. Over 206 to 215 the chain is Cytoplasmic; the sequence is RHYFKVKHII.

This sequence belongs to the EMP24/GP25L family.

It localises to the endoplasmic reticulum membrane. Its subcellular location is the golgi apparatus membrane. In terms of biological role, constituent of COPII-coated endoplasmic reticulum-derived transport vesicles. Required for efficient transport of a subset of secretory proteins to the Golgi. Facilitates retrograde transport from the Golgi to the endoplasmic reticulum. In Candida albicans (strain SC5314 / ATCC MYA-2876) (Yeast), this protein is Endoplasmic reticulum vesicle protein 25 (ERV25).